We begin with the raw amino-acid sequence, 295 residues long: Ribosomal RNA small subunit methyltransferase H (295 aa).

Residues 36 to 38 (GGH), D56, L90, D104, and H111 each bind S-adenosyl-L-methionine.

It belongs to the methyltransferase superfamily. RsmH family.

It is found in the cytoplasm. The catalysed reaction is cytidine(1402) in 16S rRNA + S-adenosyl-L-methionine = N(4)-methylcytidine(1402) in 16S rRNA + S-adenosyl-L-homocysteine + H(+). Its function is as follows. Specifically methylates the N4 position of cytidine in position 1402 (C1402) of 16S rRNA. The protein is Ribosomal RNA small subunit methyltransferase H of Dictyoglomus turgidum (strain DSM 6724 / Z-1310).